An 897-amino-acid chain; its full sequence is Valine--tRNA ligase (897 aa).

Residues 46-56 carry the 'HIGH' region motif; it reads PNVTGSLHMGH. Residues 532–536 carry the 'KMSKS' region motif; it reads KMSKT. Lysine 535 provides a ligand contact to ATP. Residues 839–897 adopt a coiled-coil conformation; the sequence is LRRSLEKLDKESGVLAARLDNASYLANAPAELVTESRAKLAEQRAQAAILAEQLARLEN.

Belongs to the class-I aminoacyl-tRNA synthetase family. ValS type 1 subfamily. As to quaternary structure, monomer.

Its subcellular location is the cytoplasm. It carries out the reaction tRNA(Val) + L-valine + ATP = L-valyl-tRNA(Val) + AMP + diphosphate. In terms of biological role, catalyzes the attachment of valine to tRNA(Val). As ValRS can inadvertently accommodate and process structurally similar amino acids such as threonine, to avoid such errors, it has a 'posttransfer' editing activity that hydrolyzes mischarged Thr-tRNA(Val) in a tRNA-dependent manner. The chain is Valine--tRNA ligase from Gloeobacter violaceus (strain ATCC 29082 / PCC 7421).